The following is a 243-amino-acid chain: uncharacterized protein (243 aa).

Helical transmembrane passes span Ala38–Phe58, Phe99–Tyr119, Phe143–Leu163, and Ala204–Phe224.

The protein resides in the cell membrane. This is an uncharacterized protein from Mycoplasma pneumoniae (strain ATCC 29342 / M129 / Subtype 1) (Mycoplasmoides pneumoniae).